Reading from the N-terminus, the 464-residue chain is MNTSELETLIRTILSEQLTTPAQTPVQPQGKGIFQSVSEAIDAAHQAFLRYQQCPLKTRSAIISAMRQELTPLLAPLAEESANETGMGNKEDKFLKNKAALDNTPGVEDLTTTALTGDGGMVLFEYSPFGVIGSVAPSTNPTETIINNSISMLAAGNSIYFSPHPGAKKVSLKLISLIEEIAFRCCGIRNLVVTVAEPTFEATQQMMAHPRIAVLAITGGPGIVAMGMKSGKKVIGAGAGNPPCIVDETADLVKAAEDIINGASFDYNLPCIAEKSLIVVESVAERLVQQMQTFGALLLSPADTDKLRAVCLPEGQANKKLVGKSPSAMLEAAGIAVPAKAPRLLIALVNADDPWVTSEQLMPMLPVVKVSDFDSALALALKVEEGLHHTAIMHSQNVSRLNLAARTLQTSIFVKNGPSYAGIGVGGEGFTTFTIATPTGEGTTSARTFARSRRCVLTNGFSIR.

The tract at residues 1–18 (MNTSELETLIRTILSEQL) is targets protein to the BMC.

It belongs to the EutE/PduP family. As to quaternary structure, interacts with BMC shell proteins PduA and PduJ, which target this protein to BMC. Interacts with PduQ, probably via the N-terminus of PduQ. Interacts with PduK, probably with its BMC-containing N-terminus.

Its subcellular location is the bacterial microcompartment. It carries out the reaction propanal + NAD(+) + CoA = propanoyl-CoA + NADH + H(+). It participates in polyol metabolism; 1,2-propanediol degradation. Functionally, a CoA-acylating aldehyde dehydrogenase required for optimal 1,2-propanediol (1,2-PD) degradation. Optimizes growth in the bacterial microcompartment (BMC) dedicated to 1,2-PD degradation by minimizing propionaldehyde toxicity. Directly targeted to the BMC. NAD(+) and NADH are regenerated internally within the Pdu BMC by the PduP and PduQ enzymes, which reduce NAD(+) and oxidize NADH respectively, although there must also be cofactor transport across the BMC. The 1,2-PD-specific bacterial microcompartment (BMC) concentrates low levels of 1,2-PD catabolic enzymes, concentrates volatile reaction intermediates thus enhancing pathway flux and keeps the level of toxic, mutagenic propionaldehyde low. The sequence is that of Propanal dehydrogenase (CoA-propanoylating) from Salmonella typhimurium (strain LT2 / SGSC1412 / ATCC 700720).